Consider the following 192-residue polypeptide: Large ribosomal subunit protein uL5 (192 aa).

It belongs to the universal ribosomal protein uL5 family. In terms of assembly, part of the 50S ribosomal subunit; part of the 5S rRNA/L5/L18/L25 subcomplex. Contacts the 5S rRNA and the P site tRNA. Forms a bridge to the 30S subunit in the 70S ribosome.

Functionally, this is one of the proteins that bind and probably mediate the attachment of the 5S RNA into the large ribosomal subunit, where it forms part of the central protuberance. In the 70S ribosome it contacts protein S13 of the 30S subunit (bridge B1b), connecting the 2 subunits; this bridge is implicated in subunit movement. Contacts the P site tRNA; the 5S rRNA and some of its associated proteins might help stabilize positioning of ribosome-bound tRNAs. The sequence is that of Large ribosomal subunit protein uL5 from Paenarthrobacter aurescens (strain TC1).